The following is a 101-amino-acid chain: NADH-quinone oxidoreductase subunit K (101 aa).

The next 3 helical transmembrane spans lie at 4-24 (LAHY…GIFL), 29-49 (IIII…NFVA), and 61-81 (IFVF…LAIL).

This sequence belongs to the complex I subunit 4L family. NDH-1 is composed of 14 different subunits. Subunits NuoA, H, J, K, L, M, N constitute the membrane sector of the complex.

It localises to the cell inner membrane. It catalyses the reaction a quinone + NADH + 5 H(+)(in) = a quinol + NAD(+) + 4 H(+)(out). In terms of biological role, NDH-1 shuttles electrons from NADH, via FMN and iron-sulfur (Fe-S) centers, to quinones in the respiratory chain. The immediate electron acceptor for the enzyme in this species is believed to be ubiquinone. Couples the redox reaction to proton translocation (for every two electrons transferred, four hydrogen ions are translocated across the cytoplasmic membrane), and thus conserves the redox energy in a proton gradient. This is NADH-quinone oxidoreductase subunit K from Burkholderia vietnamiensis (strain G4 / LMG 22486) (Burkholderia cepacia (strain R1808)).